The chain runs to 41 residues: Photosystem I reaction center subunit IX (41 aa).

The helical transmembrane segment at 7–27 threads the bilayer; that stretch reads YLSTAPVLTLVSLTAVAGLLI.

Belongs to the PsaJ family.

The protein resides in the plastid. Its subcellular location is the chloroplast thylakoid membrane. May help in the organization of the PsaE and PsaF subunits. This Chlorella vulgaris (Green alga) protein is Photosystem I reaction center subunit IX.